A 475-amino-acid chain; its full sequence is NADP-dependent glyceraldehyde-3-phosphate dehydrogenase (475 aa).

Substrate is bound at residue Arg103. An NADP(+)-binding site is contributed by Ser151. Residue 154 to 155 participates in substrate binding; that stretch reads NY. NADP(+)-binding positions include Lys177, Thr180, Asp215, and 230-251; that span reads GSTG…MLEL. Residues Glu250 and Cys284 contribute to the active site. Residue 283–285 participates in substrate binding; that stretch reads RCT. NADP(+) is bound at residue Glu377. Arg437 is a substrate binding site.

It belongs to the aldehyde dehydrogenase family. Homotetramer.

It carries out the reaction D-glyceraldehyde 3-phosphate + NADP(+) + H2O = (2R)-3-phosphoglycerate + NADPH + 2 H(+). In Streptococcus mutans serotype c (strain ATCC 700610 / UA159), this protein is NADP-dependent glyceraldehyde-3-phosphate dehydrogenase (gapN).